We begin with the raw amino-acid sequence, 221 residues long: Cytidylate kinase (221 aa).

Residue 11-19 (GPTASGKGT) coordinates ATP.

This sequence belongs to the cytidylate kinase family. Type 1 subfamily.

The protein localises to the cytoplasm. The catalysed reaction is CMP + ATP = CDP + ADP. The enzyme catalyses dCMP + ATP = dCDP + ADP. In Cupriavidus pinatubonensis (strain JMP 134 / LMG 1197) (Cupriavidus necator (strain JMP 134)), this protein is Cytidylate kinase.